Here is a 196-residue protein sequence, read N- to C-terminus: Putative NADH dehydrogenase/NAD(P)H nitroreductase PST_3601 (196 aa).

It belongs to the nitroreductase family. HadB/RutE subfamily. The cofactor is FMN.

The sequence is that of Putative NADH dehydrogenase/NAD(P)H nitroreductase PST_3601 from Stutzerimonas stutzeri (strain A1501) (Pseudomonas stutzeri).